The primary structure comprises 318 residues: Porphobilinogen deaminase (318 aa).

Cys-241 carries the S-(dipyrrolylmethanemethyl)cysteine modification.

The protein belongs to the HMBS family. In terms of assembly, monomer. Dipyrromethane serves as cofactor.

The catalysed reaction is 4 porphobilinogen + H2O = hydroxymethylbilane + 4 NH4(+). It participates in porphyrin-containing compound metabolism; protoporphyrin-IX biosynthesis; coproporphyrinogen-III from 5-aminolevulinate: step 2/4. In terms of biological role, tetrapolymerization of the monopyrrole PBG into the hydroxymethylbilane pre-uroporphyrinogen in several discrete steps. The polypeptide is Porphobilinogen deaminase (Geotalea uraniireducens (strain Rf4) (Geobacter uraniireducens)).